Consider the following 256-residue polypeptide: MDFTKPETVLNLQNIRDELVRMEDSIIFKFIERSHFATCPSVYEANHPGLEIPNFKGSFLDWALSNLEIAHSRIRRFESPDETPFFPDKIQKSFLPSINYPQILAPYAPEVNYNDKIKKVYIEKIIPLISKRDGDDKNNFGSVATRDIECLQSLSRRIHFGKFVAEAKFQSDIPLYTKLIKSKDVEGIMKNITNSAVEEKILERLTKKAEVYGVDPTNESGERRITPEYLVKIYKEIVIPITKEVEVEYLLRRLEE.

One can recognise a Chorismate mutase domain in the interval 3 to 255 (FTKPETVLNL…EVEYLLRRLE (253 aa)). Residues R75 and R76 each contribute to the L-tyrosine site. L-tryptophan-binding residues include N138, N139, G141, and S142. L-tyrosine contacts are provided by N139, G141, S142, and T145.

As to quaternary structure, homodimer.

The protein resides in the cytoplasm. It catalyses the reaction chorismate = prephenate. It participates in metabolic intermediate biosynthesis; prephenate biosynthesis; prephenate from chorismate: step 1/1. Each dimer has two allosteric binding sites that can bind the regulatory effectors tryptophan or tyrosine. Can bind either one tryptophan or one tyrosine, two tryptophan or two tyrosine or one tryptophan and one tyrosine, which differentially affect the catalytic activity. Activated by tryptophan and subject to feedback inhibition by tyrosine. In the presence of both tryptophan and tyrosine, the enzyme is in the activated state. Functionally, catalyzes the Claisen rearrangement of chorismate to prephenate. Acts at the first branch point in the aromatic amino acid pathway where it steers biosynthesis towards phenylalanine and tyrosine, and away from tryptophan. In Saccharomyces cerevisiae (strain ATCC 204508 / S288c) (Baker's yeast), this protein is Chorismate mutase.